Here is a 437-residue protein sequence, read N- to C-terminus: UDP-N-acetylmuramoylalanine--D-glutamate ligase (437 aa).

115 to 121 contacts ATP; that stretch reads GSNGKST.

Belongs to the MurCDEF family.

The protein resides in the cytoplasm. It catalyses the reaction UDP-N-acetyl-alpha-D-muramoyl-L-alanine + D-glutamate + ATP = UDP-N-acetyl-alpha-D-muramoyl-L-alanyl-D-glutamate + ADP + phosphate + H(+). It participates in cell wall biogenesis; peptidoglycan biosynthesis. Its function is as follows. Cell wall formation. Catalyzes the addition of glutamate to the nucleotide precursor UDP-N-acetylmuramoyl-L-alanine (UMA). The polypeptide is UDP-N-acetylmuramoylalanine--D-glutamate ligase (Vibrio campbellii (strain ATCC BAA-1116)).